A 206-amino-acid chain; its full sequence is LOB domain-containing protein 2 (206 aa).

A disordered region spans residues 1–20 (MMQRNSNNTSITSNISNNSS). The LOB domain occupies 23-123 (QACASCKHQR…KSLVHNQPLI (101 aa)).

This sequence belongs to the LOB domain-containing protein family.

This is LOB domain-containing protein 2 (LBD2) from Arabidopsis thaliana (Mouse-ear cress).